A 428-amino-acid chain; its full sequence is 3-phosphoshikimate 1-carboxyvinyltransferase (428 aa).

The 3-phosphoshikimate site is built by lysine 20, serine 21, and arginine 25. Lysine 20 is a binding site for phosphoenolpyruvate. Residues glycine 92 and arginine 120 each contribute to the phosphoenolpyruvate site. Serine 166, glutamine 168, aspartate 314, and lysine 341 together coordinate 3-phosphoshikimate. Position 168 (glutamine 168) interacts with phosphoenolpyruvate. Residue aspartate 314 is the Proton acceptor of the active site. 2 residues coordinate phosphoenolpyruvate: arginine 345 and arginine 387.

It belongs to the EPSP synthase family. In terms of assembly, monomer.

It localises to the cytoplasm. It catalyses the reaction 3-phosphoshikimate + phosphoenolpyruvate = 5-O-(1-carboxyvinyl)-3-phosphoshikimate + phosphate. It functions in the pathway metabolic intermediate biosynthesis; chorismate biosynthesis; chorismate from D-erythrose 4-phosphate and phosphoenolpyruvate: step 6/7. Its function is as follows. Catalyzes the transfer of the enolpyruvyl moiety of phosphoenolpyruvate (PEP) to the 5-hydroxyl of shikimate-3-phosphate (S3P) to produce enolpyruvyl shikimate-3-phosphate and inorganic phosphate. The protein is 3-phosphoshikimate 1-carboxyvinyltransferase of Listeria monocytogenes serotype 4b (strain CLIP80459).